Consider the following 207-residue polypeptide: Suppressor of IKBKE 1 (207 aa).

Coiled coils occupy residues 70–102 and 162–193; these read HILL…DALE and QFCK…SLQA.

This sequence belongs to the SIKE family. In terms of assembly, interacts with IKBKE and TBK1 via its coiled coil region. Interaction with TBK1 is disrupted upon viral infection or TLR3 stimulation. Interacts with CDC42BPB. Interacts with SIKE1 which mediates association with the STRIPAK core complex composed of PP2A catalytic and scaffolding subunits, the striatins (PP2A regulatory subunits), the striatin-associated proteins MOB4, STRIP1 and STRIP2, PDCD10 and members of the STE20 kinases, such as STK24 and STK26. In terms of tissue distribution, widely expressed. Expressed in brain, heart, skeletal muscle, colon, thymus, spleen, kidney, liver, small intestine, placenta, lung and leukocytes. Present in all cell lines tested (at protein level).

The protein localises to the cytoplasm. Its function is as follows. Physiological suppressor of IKK-epsilon and TBK1 that plays an inhibitory role in virus- and TLR3-triggered IRF3. Inhibits TLR3-mediated activation of interferon-stimulated response elements (ISRE) and the IFN-beta promoter. May act by disrupting the interactions of IKBKE or TBK1 with TICAM1/TRIF, IRF3 and RIGI. Does not inhibit NF-kappa-B activation pathways. Associates with the striatin-interacting phosphatase and kinase (STRIPAK) core complex, forming the extended (SIKE1:SLMAP)STRIPAK complex. The (SIKE1:SLMAP)STRIPAK complex dephosphorylates STK3 leading to the inhibition of Hippo signaling and the control of cell growth. This chain is Suppressor of IKBKE 1, found in Homo sapiens (Human).